Reading from the N-terminus, the 232-residue chain is Dof zinc finger protein DOF4.3 (232 aa).

The segment at 25 to 79 (RVCARCDSDNTKFCYYNNYSEFQPRYFCKNCRRYWTHGGALRNVPIGGSSRAKRT) adopts a Dof-type zinc-finger fold. Zn(2+) is bound by residues Cys27, Cys30, Cys52, and Cys55.

The protein resides in the nucleus. Transcription factor that binds specifically to a 5'-AA[AG]G-3' consensus core sequence. The polypeptide is Dof zinc finger protein DOF4.3 (DOF4.3) (Arabidopsis thaliana (Mouse-ear cress)).